The primary structure comprises 414 residues: MEATTKKMAMIEIGKGWAASCLEARTCVISNEEDIYAEPRADTPVLKLDSTVRTALPPGYGIVISGTARNHKTAWEIVPGLVDSGYTGLLGLLLVPTDETPATGSAGGGIVSFSRGGVHARLTVIKLVPDDIMGACGAGAQRLPLKTAITSFKGDEDLLGNGFDHCMESLASIYPDILHVQLDCPVYFGCTGCKAFYRRLGSCLETRPLNELGSDHIYLRRGSAYESVNRFAAPDDVMFVAMYGKWLLIGMAETPNEKLTVELRDDDSSPAALIPFHDTFGQKEAEDAGYDIRAPENCTLPPGGSVRVILRQKLHMGKGRAAFVMGRSSMNLKGVLVEPERVVDDEWVSFNITNIRDAAAFFRKNDRIAQLVALEDKLELMGGVDALPWRVVQSVQEEKKNSSRGDKGFGSSGV.

Substrate is bound by residues 327-329 (RSS) and 409-410 (FG).

Belongs to the dUTPase family. Mg(2+) is required as a cofactor.

It catalyses the reaction dUTP + H2O = dUMP + diphosphate + H(+). Involved in nucleotide metabolism: produces dUMP, the immediate precursor of thymidine nucleotides and decreases the intracellular concentration of dUTP to avoid uracil incorporation into viral DNA. This chain is Deoxyuridine 5'-triphosphate nucleotidohydrolase, found in Amazona oratrix (yellow-headed parrot).